A 455-amino-acid polypeptide reads, in one-letter code: Phosphoglucosamine mutase (455 aa).

Catalysis depends on Ser102, which acts as the Phosphoserine intermediate. Ser102, Asp241, Asp243, and Asp245 together coordinate Mg(2+). Ser102 bears the Phosphoserine mark.

The protein belongs to the phosphohexose mutase family. It depends on Mg(2+) as a cofactor. In terms of processing, activated by phosphorylation.

The catalysed reaction is alpha-D-glucosamine 1-phosphate = D-glucosamine 6-phosphate. Functionally, catalyzes the conversion of glucosamine-6-phosphate to glucosamine-1-phosphate. The protein is Phosphoglucosamine mutase of Legionella pneumophila (strain Paris).